Here is a 190-residue protein sequence, read N- to C-terminus: Elongation factor P (190 aa).

This sequence belongs to the elongation factor P family.

It localises to the cytoplasm. It participates in protein biosynthesis; polypeptide chain elongation. Functionally, involved in peptide bond synthesis. Stimulates efficient translation and peptide-bond synthesis on native or reconstituted 70S ribosomes in vitro. Probably functions indirectly by altering the affinity of the ribosome for aminoacyl-tRNA, thus increasing their reactivity as acceptors for peptidyl transferase. This Mycoplasma genitalium (strain ATCC 33530 / DSM 19775 / NCTC 10195 / G37) (Mycoplasmoides genitalium) protein is Elongation factor P (efp).